A 217-amino-acid chain; its full sequence is MDQFNQQQQSQMNKGIPGKPHKNHGGHEMFDMHEVLSGTLTVLDQFMMLRQFCKDQELLNILDRQHQFITSQYNITAECFKTGSEPSQKTATYMMKEDNQTVYGMQPSQPKKPVQSMNDIDDSIISRQMLCAIKAQASMLTMASLEMTNPAVRRVLSAQIQEYVEMAFEIFLYQNKHGYYQVPQLDAQDMEQLRNSFAPAQGQMPPTQGGMGQQGLH.

The span at Met1–Gln11 shows a compositional bias: low complexity. The tract at residues Met1 to Glu28 is disordered.

Belongs to the CotF family.

The protein resides in the spore coat. The sequence is that of Spore coat protein F-like protein YhcQ (yhcQ) from Bacillus subtilis (strain 168).